The following is a 154-amino-acid chain: UPF0178 protein YaiI (154 aa).

It belongs to the UPF0178 family.

The protein is UPF0178 protein YaiI of Escherichia coli (strain ATCC 8739 / DSM 1576 / NBRC 3972 / NCIMB 8545 / WDCM 00012 / Crooks).